A 257-amino-acid polypeptide reads, in one-letter code: Protein CUSTOS (257 aa).

Residues 1–11 show a composition bias toward low complexity; sequence MSDLESSSSSS. The disordered stretch occupies residues 1–72; that stretch reads MSDLESSSSS…HEQDGNELQT (72 aa). Residues 32–41 show a composition bias toward basic and acidic residues; the sequence is QRPRGPEKPG. Serine 55 bears the Phosphoserine mark. Threonine 73 is modified (phosphothreonine). 2 disordered regions span residues 120–157 and 170–257; these read FTSI…RRCR and SAIH…VPSN. Basic residues-rich tracts occupy residues 180–190 and 227–237; these read KKKKRKLKKKA and TKKKKRKKKTK. Positions 228–236 match the Nucleolar localization signal (NLS) motif; it reads KKKKRKKKT.

It belongs to the CUSTOS family.

Its subcellular location is the nucleus envelope. Functionally, plays a role in the regulation of Wnt signaling pathway during early development. The polypeptide is Protein CUSTOS (Bos taurus (Bovine)).